We begin with the raw amino-acid sequence, 159 residues long: Ribosomal RNA large subunit methyltransferase H (159 aa).

Residues Leu-76, Gly-108, and 127–132 (FSKMTF) contribute to the S-adenosyl-L-methionine site.

The protein belongs to the RNA methyltransferase RlmH family. In terms of assembly, homodimer.

Its subcellular location is the cytoplasm. The enzyme catalyses pseudouridine(1915) in 23S rRNA + S-adenosyl-L-methionine = N(3)-methylpseudouridine(1915) in 23S rRNA + S-adenosyl-L-homocysteine + H(+). Functionally, specifically methylates the pseudouridine at position 1915 (m3Psi1915) in 23S rRNA. In Clostridium botulinum (strain 657 / Type Ba4), this protein is Ribosomal RNA large subunit methyltransferase H.